Here is a 446-residue protein sequence, read N- to C-terminus: Dual specificity mitogen-activated protein kinase kinase 2 (446 aa).

Residues 27-42 (SSGSSAGLGFQGQSQQ) are compositionally biased toward low complexity. Residues 27-51 (SSGSSAGLGFQGQSQQHSTVNSMQG) are disordered. In terms of domain architecture, Protein kinase spans 149–414 (LKDLGEIGRG…YKELLKHPFI (266 aa)). ATP contacts are provided by residues 155 to 163 (IGRGAYGSV) and Lys178. Residue Asp276 is the Proton acceptor of the active site. Position 304 is a phosphoserine; by RAF (Ser304). Thr308 is subject to Phosphothreonine; by RAF.

The protein belongs to the protein kinase superfamily. STE Ser/Thr protein kinase family. MAP kinase kinase subfamily. In terms of processing, MAPKK is itself dependent on Ser/Thr phosphorylation for activity catalyzed by MAP kinase kinase kinases. As to expression, expressed abundantly in the adult brain and muscle.

It carries out the reaction L-seryl-[protein] + ATP = O-phospho-L-seryl-[protein] + ADP + H(+). The enzyme catalyses L-threonyl-[protein] + ATP = O-phospho-L-threonyl-[protein] + ADP + H(+). The catalysed reaction is L-tyrosyl-[protein] + ATP = O-phospho-L-tyrosyl-[protein] + ADP + H(+). In terms of biological role, catalyzes the concomitant phosphorylation of a threonine and a tyrosine residue in a Thr-Glu-Tyr sequence located in MAP kinases. In Xenopus laevis (African clawed frog), this protein is Dual specificity mitogen-activated protein kinase kinase 2 (map2k2).